The chain runs to 321 residues: DNA-directed RNA polymerase subunit alpha (321 aa).

The interval 1-235 (MAYQIECLET…DLFSPLKEVP (235 aa)) is alpha N-terminal domain (alpha-NTD). Positions 252 to 321 (QIPIEQLNLS…TLPPQKAARN (70 aa)) are alpha C-terminal domain (alpha-CTD).

Belongs to the RNA polymerase alpha chain family. Homodimer. In cyanobacteria the RNAP catalytic core is composed of 2 alpha, 1 beta, 1 beta', 1 gamma and 1 omega subunit. When a sigma factor is associated with the core the holoenzyme is formed, which can initiate transcription.

It catalyses the reaction RNA(n) + a ribonucleoside 5'-triphosphate = RNA(n+1) + diphosphate. Functionally, DNA-dependent RNA polymerase catalyzes the transcription of DNA into RNA using the four ribonucleoside triphosphates as substrates. The protein is DNA-directed RNA polymerase subunit alpha of Thermosynechococcus vestitus (strain NIES-2133 / IAM M-273 / BP-1).